Consider the following 311-residue polypeptide: Pyrimidine-specific ribonucleoside hydrolase RihA (311 aa).

His240 is a catalytic residue.

It belongs to the IUNH family. RihA subfamily.

In terms of biological role, hydrolyzes with equal efficiency cytidine or uridine to ribose and cytosine or uracil, respectively. The polypeptide is Pyrimidine-specific ribonucleoside hydrolase RihA (Escherichia coli O45:K1 (strain S88 / ExPEC)).